Consider the following 559-residue polypeptide: Leucine-rich repeat protein soc-2 (559 aa).

The span at 1 to 17 shows a compositional bias: basic and acidic residues; that stretch reads METSKEFEFRPAKETSR. Residues 1 to 55 are disordered; the sequence is METSKEFEFRPAKETSRSKSPGGIVGRLSNFARNKARHSLSEKGSNSVGGSGGAG. LRR repeat units lie at residues 74–95, 97–118, 120–142, 143–164, 166–187, 189–210, 212–233, 235–256, 258–279, 281–302, 305–326, 329–350, 353–374, 376–397, 399–420, 422–443, 445–466, 468–489, 491–513, and 515–536; these read QDQR…IKEL, QLTE…IGQL, NLKK…ASLE, SLET…IYKI, SLET…IGNL, KLKM…IGKL, SLVV…IGDC, SLTQ…IGKL, NLVR…LESC, QLEE…LLTM, KIHT…GPQQ, STVT…IFSK, RLTK…MGSW, SITE…IEKL, NLEI…IGNL, KLRE…IGFL, HLTK…IGNL, SLQD…IGHL, SLKS…LALC, and SLEI…ITAG.

It belongs to the SHOC2 family. In terms of assembly, interacts with let-60.

Its function is as follows. Acts as a Ras effector and participates in MAPK pathway activation. Probably acts as a scaffolding protein in a protein phosphatase complex that specifically dephosphorylates Raf kinase and stimulates Raf activity at specialized signaling complexes upon Ras activation. Required for vulval development. Involved in fluid homeostasis. Plays a role in nicotinic acetylcholine receptor (nAChR)-mediated sensitivity to nicotine. The chain is Leucine-rich repeat protein soc-2 (soc-2) from Caenorhabditis elegans.